The chain runs to 287 residues: 3-methyl-2-oxobutanoate hydroxymethyltransferase (287 aa).

Polar residues predominate over residues 1-19 (MSTLPKTLTLDTSTSRANP). Positions 1–24 (MSTLPKTLTLDTSTSRANPTPQPM) are disordered. Mg(2+) contacts are provided by Asp66 and Asp105. 3-methyl-2-oxobutanoate contacts are provided by residues 66–67 (DS), Asp105, and Lys135. Glu137 lines the Mg(2+) pocket. The Proton acceptor role is filled by Glu204.

The protein belongs to the PanB family. Homodecamer; pentamer of dimers. Mg(2+) is required as a cofactor.

It localises to the cytoplasm. It carries out the reaction 3-methyl-2-oxobutanoate + (6R)-5,10-methylene-5,6,7,8-tetrahydrofolate + H2O = 2-dehydropantoate + (6S)-5,6,7,8-tetrahydrofolate. It functions in the pathway cofactor biosynthesis; (R)-pantothenate biosynthesis; (R)-pantoate from 3-methyl-2-oxobutanoate: step 1/2. Functionally, catalyzes the reversible reaction in which hydroxymethyl group from 5,10-methylenetetrahydrofolate is transferred onto alpha-ketoisovalerate to form ketopantoate. The polypeptide is 3-methyl-2-oxobutanoate hydroxymethyltransferase (Sphingopyxis alaskensis (strain DSM 13593 / LMG 18877 / RB2256) (Sphingomonas alaskensis)).